Reading from the N-terminus, the 635-residue chain is Phosphatidylserine decarboxylase proenzyme 2 (635 aa).

Residues 20–146 enclose the C2 domain; sequence KLQKFRIHRR…VVQEPESTCK (127 aa). 2 EF-hand domains span residues 174 to 209 and 210 to 245; these read TERRFAKRILSIVDYNEDGQLSFSEFSDLIKAFGNL and VAANKKEELFKAADLNGDGVVTIDELAALLALQQEQ. Residues Asp-187, Asn-189, Asp-191, Gln-193, Glu-198, Asp-223, Asn-225, Asp-227, and Glu-234 each contribute to the Ca(2+) site. Residues Asp-443, His-499, and Ser-587 each act as charge relay system; for autoendoproteolytic cleavage activity in the active site. Ser-587 (schiff-base intermediate with substrate; via pyruvic acid; for decarboxylase activity) is an active-site residue. Ser-587 is subject to Pyruvic acid (Ser); by autocatalysis.

Belongs to the phosphatidylserine decarboxylase family. PSD-B subfamily. Eukaryotic type II sub-subfamily. Heterodimer of a large membrane-associated beta subunit and a small pyruvoyl-containing alpha subunit. It depends on pyruvate as a cofactor. Is synthesized initially as an inactive proenzyme. Formation of the active enzyme involves a self-maturation process in which the active site pyruvoyl group is generated from an internal serine residue via an autocatalytic post-translational modification. Two non-identical subunits are generated from the proenzyme in this reaction, and the pyruvate is formed at the N-terminus of the alpha chain, which is derived from the carboxyl end of the proenzyme. The autoendoproteolytic cleavage occurs by a canonical serine protease mechanism, in which the side chain hydroxyl group of the serine supplies its oxygen atom to form the C-terminus of the beta chain, while the remainder of the serine residue undergoes an oxidative deamination to produce ammonia and the pyruvoyl prosthetic group on the alpha chain. During this reaction, the Ser that is part of the protease active site of the proenzyme becomes the pyruvoyl prosthetic group, which constitutes an essential element of the active site of the mature decarboxylase. Highly expressed in flowers and at lower levels in leaves.

It localises to the vacuole membrane. The catalysed reaction is a 1,2-diacyl-sn-glycero-3-phospho-L-serine + H(+) = a 1,2-diacyl-sn-glycero-3-phosphoethanolamine + CO2. It participates in phospholipid metabolism; phosphatidylethanolamine biosynthesis; phosphatidylethanolamine from CDP-diacylglycerol: step 2/2. Functionally, catalyzes the formation of phosphatidylethanolamine (PtdEtn) from phosphatidylserine (PtdSer). Plays a central role in phospholipid metabolism and in the interorganelle trafficking of phosphatidylserine. Contributes only to a minor proportion of PtdEtn production. The sequence is that of Phosphatidylserine decarboxylase proenzyme 2 (PSD2) from Arabidopsis thaliana (Mouse-ear cress).